Reading from the N-terminus, the 297-residue chain is MKIKIGTRPSNLAVAQANMVASSLEAIGIDTEIVKHRSAGDIDTKNPIYSIGKTGVFVQDLNNMILRGEIDVAVHSAKDIPSEIENRLTIAATLKRGSFNDALVSKYDLRSLPISAKVGTSSIRRIFQLKYARQDLKFENIRGNIETRIAKMSELGLDAIVMAEAAIQRLGLNVEYSKLDENKFVPAPNQGIIAVVSKKEGTVRKILEEINDENTFEEMQIERSVVQQLKLGCSTPVGILSRPSGKGHKIIAQFFSMQGDDVSVFEQYLNDLSDVDSLVSYIRENIPREYGYIASEE.

Cys-233 carries the post-translational modification S-(dipyrrolylmethanemethyl)cysteine.

This sequence belongs to the HMBS family. The cofactor is dipyrromethane.

The enzyme catalyses 4 porphobilinogen + H2O = hydroxymethylbilane + 4 NH4(+). Its pathway is porphyrin-containing compound metabolism; protoporphyrin-IX biosynthesis; coproporphyrinogen-III from 5-aminolevulinate: step 2/4. Tetrapolymerization of the monopyrrole PBG into the hydroxymethylbilane pre-uroporphyrinogen in several discrete steps. The polypeptide is Probable porphobilinogen deaminase (Thermoplasma volcanium (strain ATCC 51530 / DSM 4299 / JCM 9571 / NBRC 15438 / GSS1)).